A 1956-amino-acid polypeptide reads, in one-letter code: Sodium channel protein type 10 subunit alpha (1956 aa).

Residues 1–125 are Cytoplasmic-facing; it reads MEFPIGSLET…FNLIRRTAIK (125 aa). A disordered region spans residues 27–54; the sequence is QIAAKQGTKKAREKHREQKDQEEKPRPQ. The segment covering 40-54 has biased composition (basic and acidic residues); sequence KHREQKDQEEKPRPQ. An I repeat occupies 116–405; it reads FNLIRRTAIK…VTMAYEEQNQ (290 aa). Residues 126–149 form a helical membrane-spanning segment; that stretch reads VSVHSWFSLFITVTILVNCVCMTR. At 150 to 154 the chain is on the extracellular side; the sequence is TDLPE. The helical transmembrane segment at 155 to 174 threads the bilayer; it reads KIEYVFTVIYTFEALIKILA. Residues 175 to 187 are Cytoplasmic-facing; the sequence is RGFCLNEFTYLRD. The helical transmembrane segment at 188–206 threads the bilayer; the sequence is PWNWLDFSVITLAYVGTAI. Residues 207-212 lie on the Extracellular side of the membrane; that stretch reads DLRGIS. A helical; Voltage-sensor transmembrane segment spans residues 213 to 232; it reads GLRTFRVLRALKTVSVIPGL. Topologically, residues 233 to 248 are cytoplasmic; the sequence is KVIVGALIHSVKKLAD. Residues 249–272 traverse the membrane as a helical segment; it reads VTILTIFCLSVFALVGLQLFKGNL. Over 273–341 the chain is Extracellular; sequence KNKCVKNDMA…PDFNYTSFDS (69 aa). The cysteines at positions 276 and 319 are disulfide-linked. 4 N-linked (GlcNAc...) asparagine glycosylation sites follow: Asn-284, Asn-288, Asn-312, and Asn-335. The pore-forming intramembrane region spans 342–366; that stretch reads FAWAFLSLFRLMTQDSWERLYQQTL. The Extracellular segment spans residues 367–373; sequence RTSGKIY. Residues 374-399 form a helical membrane-spanning segment; the sequence is MIFFVLVIFLGSFYLVNLILAVVTMA. Over 400–659 the chain is Cytoplasmic; it reads YEEQNQATTD…MWVKLKTILF (260 aa). Ser-441, Ser-444, Ser-467, and Ser-479 each carry phosphoserine. The span at 443-454 shows a compositional bias: polar residues; that stretch reads HSHNGSPLTSKN. Disordered regions lie at residues 443–485 and 500–580; these read HSHN…YNQR and SHGS…LAPG. Residues 561 to 570 show a composition bias toward basic and acidic residues; it reads DSRHGEDEHQ. Residues Ser-612 and Ser-615 each carry the phosphoserine modification. The stretch at 647–911 is one II repeat; sequence CCPMWVKLKT…EDDGEVNNLQ (265 aa). A helical membrane pass occupies residues 660–684; that stretch reads GLVTDPFAELTITLCIVVNTIFMAM. At 685–695 the chain is on the extracellular side; it reads EHHGMSPTFEA. Residues 696-719 form a helical membrane-spanning segment; that stretch reads MLQIGNIVFTIFFTAEMVFKIIAF. The Cytoplasmic segment spans residues 720-727; the sequence is DPYYYFQK. The chain crosses the membrane as a helical span at residues 728–747; the sequence is KWNIFDCIIVTVSLLELGVA. Topologically, residues 748-753 are extracellular; that stretch reads KKGSLS. Residues 754–773 traverse the membrane as a helical; Voltage-sensor segment; it reads VLRSFRLLRVFKLAKSWPTL. The Cytoplasmic segment spans residues 774–789; that stretch reads NTLIKIIGNSVGALGN. The helical transmembrane segment at 790 to 810 threads the bilayer; the sequence is LTIILAIIVFVFALVGKQLLG. Residues 811–834 are Extracellular-facing; sequence ENYRNNRKNISAPHEDWPRWHMHD. Asn-819 is a glycosylation site (N-linked (GlcNAc...) asparagine). The pore-forming intramembrane region spans 835 to 855; that stretch reads FFHSFLIVFRILCGEWIENMW. Topologically, residues 856–864 are extracellular; that stretch reads ACMEVGQKS. Cys-857 and Cys-866 are disulfide-bonded. A helical membrane pass occupies residues 865–890; the sequence is ICLILFLTVMVLGNLVVLNLFIALLL. Topologically, residues 891 to 1147 are cytoplasmic; it reads NSFSADNLTA…GWQVRKTCYR (257 aa). Disordered regions lie at residues 963 to 986 and 1041 to 1089; these read AANTARGSSGGLQAPRGPRDEHSD and DHLT…GSTV. An III repeat occupies 1140–1449; sequence QVRKTCYRIV…KKYYNAMKKL (310 aa). The helical transmembrane segment at 1148 to 1171 threads the bilayer; sequence IVEHSWFESFIIFMILLSSGSLAF. Residues 1172–1184 lie on the Extracellular side of the membrane; the sequence is EDYYLDQKPTVKA. Residues 1185 to 1210 traverse the membrane as a helical segment; it reads LLEYTDRVFTFIFVFEMLLKWVAYGF. Topologically, residues 1211 to 1216 are cytoplasmic; that stretch reads KKYFTN. A helical membrane pass occupies residues 1217-1238; the sequence is AWCWLDFLIVNISLISLTAKIL. Over 1239–1242 the chain is Extracellular; that stretch reads EYSE. The helical; Voltage-sensor transmembrane segment at 1243-1264 threads the bilayer; sequence VAPIKALRTLRALRPLRALSRF. Residues 1265–1283 are Cytoplasmic-facing; sequence EGMRVVVDALVGAIPSIMN. Residues 1284–1311 traverse the membrane as a helical segment; the sequence is VLLVCLIFWLIFSIMGVNLFAGKFWRCI. 3 N-linked (GlcNAc...) asparagine glycosylation sites follow: Asn-1312, Asn-1328, and Asn-1336. The Extracellular segment spans residues 1312 to 1353; that stretch reads NYTDGEFSLVPLSIVNNKSDCKIQNSTGSFFWVNVKVNFDNV. Residues 1354–1375 constitute an intramembrane region (pore-forming); sequence AMGYLALLQVATFKGWMDIMYA. Topologically, residues 1376-1391 are extracellular; it reads AVDSREVNMQPKWEDN. A helical membrane pass occupies residues 1392-1418; the sequence is VYMYLYFVIFIIFGGFFTLNLFVGVII. At 1419–1471 the chain is on the cytoplasmic side; the sequence is DNFNQQKKKLGGQDIFMTEEQKKYYNAMKKLGSKKPQKPIPRPLNKFQGFVFD. Ser-1451 carries the phosphoserine; by PKC modification. One copy of the IV repeat lies at 1458–1757; sequence IPRPLNKFQG…WEKFDPEATQ (300 aa). A helical transmembrane segment spans residues 1472–1495; it reads IVTRQAFDITIMVLICLNMITMMV. The Extracellular segment spans residues 1496-1506; sequence ETDDQSEEKTK. A helical membrane pass occupies residues 1507-1530; it reads ILGKINQFFVAVFTGECVMKMFAL. The Cytoplasmic portion of the chain corresponds to 1531–1536; it reads RQYYFT. The chain crosses the membrane as a helical span at residues 1537 to 1560; that stretch reads NGWNVFDFIVVVLSIASLIFSAIL. Residues 1561–1572 lie on the Extracellular side of the membrane; that stretch reads KSLQSYFSPTLF. A helical; Voltage-sensor membrane pass occupies residues 1573-1594; sequence RVIRLARIGRILRLIRAAKGIR. The Cytoplasmic portion of the chain corresponds to 1595–1609; sequence TLLFALMMSLPALFN. The helical transmembrane segment at 1610-1632 threads the bilayer; it reads IGLLLFLVMFIYSIFGMSSFPHV. Over 1633–1646 the chain is Extracellular; it reads RWEAGIDDMFNFQT. Positions 1647-1669 form an intramembrane region, pore-forming; it reads FANSMLCLFQITTSAGWDGLLSP. Over 1670–1697 the chain is Extracellular; the sequence is ILNTGPPYCDPNLPNSNGTRGDCGSPAV. Asn-1686 is a glycosylation site (N-linked (GlcNAc...) asparagine). The chain crosses the membrane as a helical span at residues 1698-1722; the sequence is GIIFFTTYIIISFLIMVNMYIAVIL. The Cytoplasmic segment spans residues 1723-1956; that stretch reads ENFNVATEES…TSMELIAPGP (234 aa). One can recognise an IQ domain in the interval 1851 to 1880; that stretch reads EDISATVIQKAYRSYVLHRSMALSNTPCVP. The disordered stretch occupies residues 1909–1956; it reads SETASATSFPPSYESVTRGLSDRVNMRTSSSIQNEDEATSMELIAPGP.

Belongs to the sodium channel (TC 1.A.1.10) family. Nav1.8/SCN10A subfamily. The channel consists of an ion conducting pore forming alpha-subunit regulated by one or more associated auxiliary subunits SCN1B, SCN2B and SCN3B; electrophysiological properties may vary depending on the type of the associated beta subunits. Found in a number of complexes with PRX, DYNLT1 and PDZD2. Interacts with proteins such as FSTL1, PRX, DYNLT1, PDZD2, S100A10 and many others. Interacts with NEDD4 and NEDD4L. In terms of processing, ubiquitinated by NEDD4L; which promotes its endocytosis. Post-translationally, phosphorylation at Ser-1451 by PKC in a highly conserved cytoplasmic loop slows inactivation of the sodium channel and reduces peak sodium currents. Lacks the cysteine which covalently binds the conotoxin GVIIJ. This cysteine (position 816) is speculated in other sodium channel subunits alpha to be implied in covalent binding with the sodium channel subunit beta-2 or beta-4. As to expression, expressed in the dorsal root ganglia and sciatic nerve.

The protein resides in the cell membrane. The enzyme catalyses Na(+)(in) = Na(+)(out). Its function is as follows. Tetrodotoxin-resistant channel that mediates the voltage-dependent sodium ion permeability of excitable membranes. Assuming opened or closed conformations in response to the voltage difference across the membrane, the protein forms a sodium-selective channel through which sodium ions may pass in accordance with their electrochemical gradient. Plays a role in neuropathic pain mechanisms. This is Sodium channel protein type 10 subunit alpha from Homo sapiens (Human).